A 367-amino-acid polypeptide reads, in one-letter code: Homeobox protein Nkx-6.1 (367 aa).

The segment at Tyr-36–Ala-133 is disordered. Low complexity-rich tracts occupy residues Pro-48–Ser-59, Gly-78–Ser-91, and Ala-110–Ala-133. The interval Leu-102–Arg-268 is repressor domain. Arg-189 bears the Asymmetric dimethylarginine mark. The segment at residues Arg-236–His-295 is a DNA-binding region (homeobox). A disordered region spans residues Lys-294–Ser-367. The span at Lys-304–Ser-317 shows a compositional bias: basic and acidic residues. The involved in DNA-binding stretch occupies residues Gln-306–Ser-367.

Pancreatic beta cells.

It is found in the nucleus. Its function is as follows. Transcription factor which binds to specific A/T-rich DNA sequences in the promoter regions of a number of genes. Involved in the development of insulin-producing beta cells in the islets of Langerhans at the secondary transition. Together with NKX2-2 and IRX3 acts to restrict the generation of motor neurons to the appropriate region of the neural tube. Belongs to the class II proteins of neuronal progenitor factors, which are induced by SHH signals. The polypeptide is Homeobox protein Nkx-6.1 (NKX6-1) (Homo sapiens (Human)).